The primary structure comprises 1253 residues: Myosin heavy chain 95F (1253 aa).

Residues 3–54 (EDTQLVWVRDAAEGYIQGRITEIGAKEFEVTPTDRKYPKRTCHFDDIHSSCD) enclose the Myosin N-terminal SH3-like domain. Residues 57 to 766 (QDHDDNCELM…KFVEFDRIMR (710 aa)) enclose the Myosin motor domain. ATP is bound at residue 151-158 (GESGAGKT). The interval 647 to 666 (GELMEKLEQNGTNFIRCIKP) is actin-binding. One can recognise an IQ domain in the interval 808 to 837 (RNKCVLIAQRIARGFLARKQHRPRYQGIGK). Positions 900 to 1022 (ANMNKLTVDL…LRLANESNGQ (123 aa)) form a coiled coil. The tract at residues 1187 to 1193 (PILLVAG) is hydrophobic region. The tract at residues 1233 to 1253 (AYKNLGAAKPNGPAAAMQKQQ) is disordered.

This sequence belongs to the TRAFAC class myosin-kinesin ATPase superfamily. Myosin family. As to expression, isoform B is present at a higher level in the head and gonads than in the thoraxes. Isoform 145 kDa is found only in the head. CLIP-190 and jar are coexpressed at several times in development and in a number of tissues, including embryonic axonal neuron processes and posterior pole.

The protein localises to the cytoplasm. It is found in the cytoskeleton. Myosin is a protein that binds to actin and has ATPase activity that is activated by actin. Together CLIP-190 and jar may coordinate the interaction between the actin and microtubule cytoskeleton. May link endocytic vesicles to microtubules and may be involved in transport in the early embryo and in the dynamic process of dorsal closure. It is believed that its function changes during the life cycle. The protein is Myosin heavy chain 95F (jar) of Drosophila melanogaster (Fruit fly).